A 620-amino-acid polypeptide reads, in one-letter code: Probable potassium transport system protein Kup 1 (620 aa).

12 consecutive transmembrane segments (helical) span residues 10-30 (LLIS…LYAL), 50-70 (VLSL…VIVI), 102-122 (MLLG…TPAI), 138-158 (LTPY…MIQK), 168-188 (FGPV…VNIV), 211-231 (MMSF…EALY), 246-266 (WFAL…ALLL), 284-304 (MVVP…QAVI), 336-356 (IYIP…VIGF), 368-388 (IAVT…MALM), 393-413 (WIAV…FFFA), and 415-435 (IIKV…SFTV).

This sequence belongs to the HAK/KUP transporter (TC 2.A.72) family.

The protein resides in the cell inner membrane. It carries out the reaction K(+)(in) + H(+)(in) = K(+)(out) + H(+)(out). Transport of potassium into the cell. Likely operates as a K(+):H(+) symporter. The protein is Probable potassium transport system protein Kup 1 of Rhodopseudomonas palustris (strain BisB18).